Here is a 227-residue protein sequence, read N- to C-terminus: ATP-dependent Clp protease proteolytic subunit (227 aa).

Serine 120 (nucleophile) is an active-site residue. The active site involves histidine 145.

Belongs to the peptidase S14 family. In terms of assembly, fourteen ClpP subunits assemble into 2 heptameric rings which stack back to back to give a disk-like structure with a central cavity, resembling the structure of eukaryotic proteasomes.

The protein resides in the cytoplasm. The catalysed reaction is Hydrolysis of proteins to small peptides in the presence of ATP and magnesium. alpha-casein is the usual test substrate. In the absence of ATP, only oligopeptides shorter than five residues are hydrolyzed (such as succinyl-Leu-Tyr-|-NHMec, and Leu-Tyr-Leu-|-Tyr-Trp, in which cleavage of the -Tyr-|-Leu- and -Tyr-|-Trp bonds also occurs).. Functionally, cleaves peptides in various proteins in a process that requires ATP hydrolysis. Has a chymotrypsin-like activity. Plays a major role in the degradation of misfolded proteins. The polypeptide is ATP-dependent Clp protease proteolytic subunit (Rickettsia bellii (strain RML369-C)).